Reading from the N-terminus, the 127-residue chain is Protein yippee-like 4 (127 aa).

The Yippee domain maps to 27–124 (RTYSCVHCRA…IEMSHMVKDN (98 aa)). Zn(2+) contacts are provided by Cys-31, Cys-34, Cys-87, and Cys-90. Phosphothreonine is present on residues Thr-92 and Thr-93. Phosphotyrosine is present on Tyr-98.

This sequence belongs to the yippee family. As to expression, detected in brain, spleen and testis.

The protein localises to the nucleus. The protein resides in the nucleolus. In Mus musculus (Mouse), this protein is Protein yippee-like 4 (Ypel4).